The primary structure comprises 107 residues: Putative double-stranded DNA mimic protein ETA_15890 (107 aa).

Belongs to the putative dsDNA mimic protein family.

Functionally, may act as a double-stranded DNA (dsDNA) mimic. Probably regulates the activity of a dsDNA-binding protein. The sequence is that of Putative double-stranded DNA mimic protein ETA_15890 from Erwinia tasmaniensis (strain DSM 17950 / CFBP 7177 / CIP 109463 / NCPPB 4357 / Et1/99).